The primary structure comprises 431 residues: Protein SHQ1 homolog (431 aa).

It belongs to the SHQ1 family.

In terms of biological role, required for the quantitative accumulation of H/ACA ribonucleoproteins (RNPs). This Caenorhabditis elegans protein is Protein SHQ1 homolog.